The chain runs to 423 residues: Serine hydroxymethyltransferase (423 aa).

(6S)-5,6,7,8-tetrahydrofolate contacts are provided by residues L120 and 124–126 (GHL). K229 is modified (N6-(pyridoxal phosphate)lysine). 353–355 (SPF) lines the (6S)-5,6,7,8-tetrahydrofolate pocket.

It belongs to the SHMT family. As to quaternary structure, homodimer. Requires pyridoxal 5'-phosphate as cofactor.

The protein localises to the cytoplasm. It catalyses the reaction (6R)-5,10-methylene-5,6,7,8-tetrahydrofolate + glycine + H2O = (6S)-5,6,7,8-tetrahydrofolate + L-serine. The protein operates within one-carbon metabolism; tetrahydrofolate interconversion. It participates in amino-acid biosynthesis; glycine biosynthesis; glycine from L-serine: step 1/1. In terms of biological role, catalyzes the reversible interconversion of serine and glycine with tetrahydrofolate (THF) serving as the one-carbon carrier. This reaction serves as the major source of one-carbon groups required for the biosynthesis of purines, thymidylate, methionine, and other important biomolecules. Also exhibits THF-independent aldolase activity toward beta-hydroxyamino acids, producing glycine and aldehydes, via a retro-aldol mechanism. This is Serine hydroxymethyltransferase from Prochlorococcus marinus (strain AS9601).